Consider the following 145-residue polypeptide: Large ribosomal subunit protein bL9 (145 aa).

This sequence belongs to the bacterial ribosomal protein bL9 family.

Functionally, binds to the 23S rRNA. The polypeptide is Large ribosomal subunit protein bL9 (Mesomycoplasma hyopneumoniae (strain 232) (Mycoplasma hyopneumoniae)).